Here is a 450-residue protein sequence, read N- to C-terminus: MRECISIHIGQAGIQVGNACWELYCLEHGIQPDGQMPSDKTVGGGDDAFNTFFSETGAGKHVPRAVFVDLEPTVIDEVRTGAYRQLFHPEQLISGKEDAANNFARGHYTIGKEIVDLCLDRIRKLADNCTGLQGFLVFNAVGGGTGSGLGSLLLERLSVDYGKKSKLGFTVYPSPQVSTSVVEPYNSVLSTHSLLEHTDVAVLLDNEAIYDICRRSLDIERPTYTNLNRLVSQVISSLTASLRFDGALNVDVTEFQTNLVPYPRIHFMLSSYAPVISAEKAYHEQLSVAEITNSAFEPSSMMAKCDPRHGKYMACCLMYRGDVVPKDVNAAVASIKTKRTIQFVDWCPTGFKCGINYQPPTVVPGGDLAKVQRAVCMISNSTSVAEVFSRIDHKFDLMYAKRAFIHWYVGEGMEEGEFSEAREDLAALEKDYEEVGAESAEGDEGEDDEY.

Q11 serves as a coordination point for GTP. The residue at position 40 (K40) is an N6-acetyllysine. Positions 71, 144, 145, 179, 206, and 228 each coordinate GTP. E71 serves as a coordination point for Mg(2+). The active site involves E254.

It belongs to the tubulin family. As to quaternary structure, dimer of alpha and beta chains. A typical microtubule is a hollow water-filled tube with an outer diameter of 25 nm and an inner diameter of 15 nM. Alpha-beta heterodimers associate head-to-tail to form protofilaments running lengthwise along the microtubule wall with the beta-tubulin subunit facing the microtubule plus end conferring a structural polarity. Microtubules usually have 13 protofilaments but different protofilament numbers can be found in some organisms and specialized cells. It depends on Mg(2+) as a cofactor. Post-translationally, undergoes a tyrosination/detyrosination cycle, the cyclic removal and re-addition of a C-terminal tyrosine residue by the enzymes tubulin tyrosine carboxypeptidase (TTCP) and tubulin tyrosine ligase (TTL), respectively. Acetylation of alpha chains at Lys-40 stabilizes microtubules and affects affinity and processivity of microtubule motors. This modification has a role in multiple cellular functions, ranging from cell motility, cell cycle progression or cell differentiation to intracellular trafficking and signaling.

It is found in the cytoplasm. The protein localises to the cytoskeleton. The enzyme catalyses GTP + H2O = GDP + phosphate + H(+). In terms of biological role, tubulin is the major constituent of microtubules, a cylinder consisting of laterally associated linear protofilaments composed of alpha- and beta-tubulin heterodimers. Microtubules grow by the addition of GTP-tubulin dimers to the microtubule end, where a stabilizing cap forms. Below the cap, tubulin dimers are in GDP-bound state, owing to GTPase activity of alpha-tubulin. This chain is Tubulin alpha-2 chain, found in Gossypium hirsutum (Upland cotton).